Consider the following 176-residue polypeptide: 3-hydroxydecanoyl-[acyl-carrier-protein] dehydratase (176 aa).

Histidine 71 is a catalytic residue.

This sequence belongs to the thioester dehydratase family. FabA subfamily. As to quaternary structure, homodimer.

It localises to the cytoplasm. It carries out the reaction a (3R)-hydroxyacyl-[ACP] = a (2E)-enoyl-[ACP] + H2O. It catalyses the reaction (3R)-hydroxydecanoyl-[ACP] = (2E)-decenoyl-[ACP] + H2O. The enzyme catalyses (2E)-decenoyl-[ACP] = (3Z)-decenoyl-[ACP]. It participates in lipid metabolism; fatty acid biosynthesis. In terms of biological role, necessary for the introduction of cis unsaturation into fatty acids. Catalyzes the dehydration of (3R)-3-hydroxydecanoyl-ACP to E-(2)-decenoyl-ACP and then its isomerization to Z-(3)-decenoyl-ACP. Can catalyze the dehydratase reaction for beta-hydroxyacyl-ACPs with saturated chain lengths up to 16:0, being most active on intermediate chain length. The polypeptide is 3-hydroxydecanoyl-[acyl-carrier-protein] dehydratase (Afipia carboxidovorans (strain ATCC 49405 / DSM 1227 / KCTC 32145 / OM5) (Oligotropha carboxidovorans)).